A 256-amino-acid polypeptide reads, in one-letter code: Small ribosomal subunit protein eS1B (256 aa).

A2 carries the N-acetylalanine; partial modification.

This sequence belongs to the eukaryotic ribosomal protein eS1 family. As to quaternary structure, component of the small ribosomal subunit. Mature ribosomes consist of a small (40S) and a large (60S) subunit. The 40S subunit contains about 33 different proteins and 1 molecule of RNA (18S). The 60S subunit contains about 49 different proteins and 3 molecules of RNA (25S, 5.8S and 5S).

It is found in the cytoplasm. In Scheffersomyces stipitis (strain ATCC 58785 / CBS 6054 / NBRC 10063 / NRRL Y-11545) (Yeast), this protein is Small ribosomal subunit protein eS1B.